Consider the following 473-residue polypeptide: Ral-GDS-related protein (473 aa).

Residues 117–215 (EPNEAKPDDP…NQPSEELPDM (99 aa)) form a disordered region. The span at 134 to 157 (ALTMPALEPAPPLLADLGPALEPE) shows a compositional bias: low complexity. Pro residues predominate over residues 173–185 (GPAPAPGEGPPPG). The Ras-GEF domain maps to 219 to 471 (PPRLLAEQLT…YKLSCQLEPE (253 aa)).

It localises to the cytoplasmic vesicle. The protein is Ral-GDS-related protein (RGL4) of Homo sapiens (Human).